A 439-amino-acid polypeptide reads, in one-letter code: Methionine aminopeptidase 2-1 (439 aa).

The interval 1–87 (MSGGESRSPD…DKLFPSGNFP (87 aa)) is disordered. The span at 22-32 (GGDDEESDGDG) shows a compositional bias: acidic residues. A compositionally biased stretch (basic residues) spans 47–61 (KKRKKRNKKKSKKKS). His-190 serves as a coordination point for substrate. 3 residues coordinate a divalent metal cation: Asp-211, Asp-222, and His-291. Substrate is bound at residue His-299. Residues Glu-324 and Glu-420 each coordinate a divalent metal cation.

The protein belongs to the peptidase M24A family. Methionine aminopeptidase eukaryotic type 2 subfamily. The cofactor is Co(2+). Zn(2+) is required as a cofactor. Mn(2+) serves as cofactor. Requires Fe(2+) as cofactor.

Its subcellular location is the cytoplasm. The catalysed reaction is Release of N-terminal amino acids, preferentially methionine, from peptides and arylamides.. Cotranslationally removes the N-terminal methionine from nascent proteins. The N-terminal methionine is often cleaved when the second residue in the primary sequence is small and uncharged (Met-Ala-, Cys, Gly, Pro, Ser, Thr, or Val). The sequence is that of Methionine aminopeptidase 2-1 from Chaetomium globosum (strain ATCC 6205 / CBS 148.51 / DSM 1962 / NBRC 6347 / NRRL 1970) (Soil fungus).